Reading from the N-terminus, the 343-residue chain is Probable dual-specificity RNA methyltransferase RlmN (343 aa).

The Proton acceptor role is filled by Glu92. The Radical SAM core domain maps to 98-328 (YHHGLTACIS…TTVRREMGAD (231 aa)). An intrachain disulfide couples Cys105 to Cys333. Cys112, Cys116, and Cys119 together coordinate [4Fe-4S] cluster. S-adenosyl-L-methionine-binding positions include 159 to 160 (GE), Ser191, 214 to 216 (SLH), and Asn290. Cys333 (S-methylcysteine intermediate) is an active-site residue.

It belongs to the radical SAM superfamily. RlmN family. Requires [4Fe-4S] cluster as cofactor.

The protein resides in the cytoplasm. It carries out the reaction adenosine(2503) in 23S rRNA + 2 reduced [2Fe-2S]-[ferredoxin] + 2 S-adenosyl-L-methionine = 2-methyladenosine(2503) in 23S rRNA + 5'-deoxyadenosine + L-methionine + 2 oxidized [2Fe-2S]-[ferredoxin] + S-adenosyl-L-homocysteine. It catalyses the reaction adenosine(37) in tRNA + 2 reduced [2Fe-2S]-[ferredoxin] + 2 S-adenosyl-L-methionine = 2-methyladenosine(37) in tRNA + 5'-deoxyadenosine + L-methionine + 2 oxidized [2Fe-2S]-[ferredoxin] + S-adenosyl-L-homocysteine. Specifically methylates position 2 of adenine 2503 in 23S rRNA and position 2 of adenine 37 in tRNAs. In Alkaliphilus oremlandii (strain OhILAs) (Clostridium oremlandii (strain OhILAs)), this protein is Probable dual-specificity RNA methyltransferase RlmN.